The sequence spans 487 residues: Cysteine--tRNA ligase (487 aa).

Cys-27 is a binding site for Zn(2+). The 'HIGH' region signature appears at 29–39 (ATVQGLPHVGH). The disordered stretch occupies residues 174–194 (IDDMQGAPDADPRGKKDPRDF). Positions 183 to 194 (ADPRGKKDPRDF) are enriched in basic and acidic residues. Zn(2+) is bound by residues Cys-225, His-250, and Glu-254. The 'KMSKS' region motif lies at 281–285 (KMSKS). Lys-284 contacts ATP.

Belongs to the class-I aminoacyl-tRNA synthetase family. As to quaternary structure, monomer. It depends on Zn(2+) as a cofactor.

The protein localises to the cytoplasm. The catalysed reaction is tRNA(Cys) + L-cysteine + ATP = L-cysteinyl-tRNA(Cys) + AMP + diphosphate. This is Cysteine--tRNA ligase from Arthrobacter sp. (strain FB24).